A 484-amino-acid chain; its full sequence is Glutamate--tRNA ligase (484 aa).

A 'HIGH' region motif is present at residues 12–22; the sequence is PSPTGEPHVGT. A 'KMSKS' region motif is present at residues 253–257; it reads KLSKR. An ATP-binding site is contributed by Lys256.

This sequence belongs to the class-I aminoacyl-tRNA synthetase family. Glutamate--tRNA ligase type 1 subfamily. Monomer.

The protein resides in the cytoplasm. It catalyses the reaction tRNA(Glu) + L-glutamate + ATP = L-glutamyl-tRNA(Glu) + AMP + diphosphate. Functionally, catalyzes the attachment of glutamate to tRNA(Glu) in a two-step reaction: glutamate is first activated by ATP to form Glu-AMP and then transferred to the acceptor end of tRNA(Glu). The polypeptide is Glutamate--tRNA ligase (Rhizobium etli (strain CIAT 652)).